We begin with the raw amino-acid sequence, 295 residues long: (R)-3-hydroxydecanoyl-ACP:CoA transacylase (295 aa).

The AB hydrolase-1 domain occupies 28–254; sequence NTIILINGSL…VIRDAGHFLD (227 aa).

The protein operates within polyester biosynthesis; polyhydroxyalkanoate biosynthesis. In terms of biological role, catalyzes the transfer of the acyl moiety from in vitro synthesized 3-hydroxydecanoyl-CoA to acyl carrier protein. The polypeptide is (R)-3-hydroxydecanoyl-ACP:CoA transacylase (phaG) (Ectopseudomonas oleovorans (Pseudomonas oleovorans)).